Here is a 435-residue protein sequence, read N- to C-terminus: Gap junction alpha-3 protein (435 aa).

Residues 2-15 (GDWSFLGRLLENAQ) lie within the membrane without spanning it. The Cytoplasmic segment spans residues 16–19 (EHST). A helical transmembrane segment spans residues 20–40 (VIGKVWLTVLFIFRILVLGAA). The Extracellular portion of the chain corresponds to 41 to 71 (AEDVWGDEQSDFTCNTQQPGCENVCYDRAFP). 3 disulfides stabilise this stretch: Cys-54-Cys-192, Cys-61-Cys-186, and Cys-65-Cys-181. The chain crosses the membrane as a helical span at residues 72–92 (ISHIRFWALQIIFVSTPTLIY). Topologically, residues 93–152 (LGHVLHIVRMEEKKKEREEEEQLKRESPSPKEPPQDNPSSRDDRGRVRMAGALLRTYVFN) are cytoplasmic. The segment covering 108–121 (EREEEEQLKRESPS) has biased composition (basic and acidic residues). Residues 108–136 (EREEEEQLKRESPSPKEPPQDNPSSRDDR) form a disordered region. The chain crosses the membrane as a helical span at residues 153–173 (IIFKTLFEVGFIAGQYFLYGF). The Extracellular portion of the chain corresponds to 174–201 (ELKPLYRCDRWPCPNTVDCFISRPTEKT). The helical transmembrane segment at 202 to 222 (IFIIFMLAVACASLLLNMLEI) threads the bilayer. Over 223 to 435 (YHLGWKKLKQ…GRARPEDLAI (213 aa)) the chain is Cytoplasmic. A disordered region spans residues 332–435 (AAERQPPALK…GRARPEDLAI (104 aa)). Low complexity-rich tracts occupy residues 342 to 389 (AYPA…ALAG) and 415 to 427 (GRAS…SSGR).

The protein belongs to the connexin family. Alpha-type (group II) subfamily. A hemichannel or connexon is composed of a hexamer of connexins. A functional gap junction is formed by the apposition of two hemichannels. Forms heteromeric channels with GJA8.

Its subcellular location is the cell membrane. It is found in the cell junction. The protein localises to the gap junction. Functionally, structural component of lens fiber gap junctions. Gap junctions are dodecameric channels that connect the cytoplasm of adjoining cells. They are formed by the docking of two hexameric hemichannels, one from each cell membrane. Small molecules and ions diffuse from one cell to a neighboring cell via the central pore. The polypeptide is Gap junction alpha-3 protein (GJA3) (Homo sapiens (Human)).